Reading from the N-terminus, the 57-residue chain is COP9 signalosome complex subunit 9 (57 aa).

It belongs to the CSN9 family. In terms of assembly, component of the CSN complex, probably composed of cops1, cops2, cops3, cops4, cops5, cops6, cops7, cops8 and cops9.

The protein resides in the nucleus. The protein localises to the cytoplasm. It localises to the nucleoplasm. Functionally, component of the COP9 signalosome complex (CSN), a complex involved in various cellular and developmental processes. The CSN complex is an essential regulator of the ubiquitin (Ubl) conjugation pathway by mediating the deneddylation of the cullin subunits of SCF-type E3 ligase complexes, leading to decrease the Ubl ligase activity. May play a role in cell proliferation. The chain is COP9 signalosome complex subunit 9 from Xenopus laevis (African clawed frog).